The sequence spans 600 residues: Mitoguardin 1 (600 aa).

2 helical membrane-spanning segments follow: residues 15 to 32 (TYAV…YSLS) and 38 to 58 (PVAK…IFLA). Phosphoserine is present on residues Ser-257 and Ser-261.

The protein belongs to the mitoguardin family. In terms of assembly, homodimer and heterodimer; forms heterodimers with MIGA2. Interacts with PLD6/MitoPLD.

It localises to the mitochondrion outer membrane. Its function is as follows. Regulator of mitochondrial fusion. Acts by forming homo- and heterodimers at the mitochondrial outer membrane and facilitating the formation of PLD6/MitoPLD dimers. May act by regulating phospholipid metabolism via PLD6/MitoPLD. The chain is Mitoguardin 1 from Mus musculus (Mouse).